Here is a 363-residue protein sequence, read N- to C-terminus: 3-dehydroquinate synthase (363 aa).

Residues 72-77 (SGEKEK), 130-131 (TT), lysine 142, and lysine 151 contribute to the NAD(+) site. Zn(2+) is bound by residues glutamate 184, histidine 247, and histidine 264.

Belongs to the sugar phosphate cyclases superfamily. Dehydroquinate synthase family. Co(2+) serves as cofactor. Requires Zn(2+) as cofactor. The cofactor is NAD(+).

It localises to the cytoplasm. It catalyses the reaction 7-phospho-2-dehydro-3-deoxy-D-arabino-heptonate = 3-dehydroquinate + phosphate. The protein operates within metabolic intermediate biosynthesis; chorismate biosynthesis; chorismate from D-erythrose 4-phosphate and phosphoenolpyruvate: step 2/7. Its function is as follows. Catalyzes the conversion of 3-deoxy-D-arabino-heptulosonate 7-phosphate (DAHP) to dehydroquinate (DHQ). This Bacillus thuringiensis subsp. konkukian (strain 97-27) protein is 3-dehydroquinate synthase.